Here is a 362-residue protein sequence, read N- to C-terminus: 3-dehydroquinate synthase (362 aa).

NAD(+) contacts are provided by residues 71-76 (DGEQYK), 105-109 (GVVGD), 129-130 (TT), Lys142, Lys151, and 169-172 (CLKT). Positions 184, 247, and 264 each coordinate Zn(2+).

It belongs to the sugar phosphate cyclases superfamily. Dehydroquinate synthase family. Co(2+) serves as cofactor. Zn(2+) is required as a cofactor. The cofactor is NAD(+).

The protein resides in the cytoplasm. It carries out the reaction 7-phospho-2-dehydro-3-deoxy-D-arabino-heptonate = 3-dehydroquinate + phosphate. It participates in metabolic intermediate biosynthesis; chorismate biosynthesis; chorismate from D-erythrose 4-phosphate and phosphoenolpyruvate: step 2/7. Functionally, catalyzes the conversion of 3-deoxy-D-arabino-heptulosonate 7-phosphate (DAHP) to dehydroquinate (DHQ). The polypeptide is 3-dehydroquinate synthase (Shigella flexneri serotype 5b (strain 8401)).